A 56-amino-acid polypeptide reads, in one-letter code: MATWICWPNNAYIDACTFIVVIILIHLIELNIHLQWVKESLNFAMENGDKEDSDNE.

This is an uncharacterized protein from Autographa californica nuclear polyhedrosis virus (AcMNPV).